Reading from the N-terminus, the 95-residue chain is Large ribosomal subunit protein bL25 (95 aa).

It belongs to the bacterial ribosomal protein bL25 family. In terms of assembly, part of the 50S ribosomal subunit; part of the 5S rRNA/L5/L18/L25 subcomplex. Contacts the 5S rRNA. Binds to the 5S rRNA independently of L5 and L18.

Functionally, this is one of the proteins that binds to the 5S RNA in the ribosome where it forms part of the central protuberance. This chain is Large ribosomal subunit protein bL25, found in Glaesserella parasuis serovar 5 (strain SH0165) (Haemophilus parasuis).